The sequence spans 362 residues: Sphingolipid delta(4)-desaturase (362 aa).

Positions Met-1–Ala-10 are enriched in low complexity. The tract at residues Met-1–Asn-20 is disordered. 3 helical membrane passes run Pro-60–Leu-80, Phe-90–His-110, and Thr-121–Phe-143. Positions His-110–His-114 match the Histidine box-1 motif. A Histidine box-2 motif is present at residues His-147 to His-151. 3 helical membrane-spanning segments follow: residues Leu-169–Tyr-189, Pro-200–Val-220, and Leu-228–Phe-248. The Histidine box-3 signature appears at His-290–His-294.

It belongs to the fatty acid desaturase type 1 family. DEGS subfamily.

It localises to the membrane. It carries out the reaction an N-acylsphinganine + 2 Fe(II)-[cytochrome b5] + O2 + 2 H(+) = an N-acylsphing-4-enine + 2 Fe(III)-[cytochrome b5] + 2 H2O. It functions in the pathway lipid metabolism; sphingolipid metabolism. Functionally, delta(4)-fatty-acid desaturase which introduces a double bond at the 4-position in the long-chain base (LCB) of ceramides. Required for sphingosine biosynthesis. This is Sphingolipid delta(4)-desaturase (dsd1) from Schizosaccharomyces pombe (strain 972 / ATCC 24843) (Fission yeast).